Here is a 463-residue protein sequence, read N- to C-terminus: Argininosuccinate lyase (463 aa).

The protein belongs to the lyase 1 family. Argininosuccinate lyase subfamily.

Its subcellular location is the cytoplasm. It carries out the reaction 2-(N(omega)-L-arginino)succinate = fumarate + L-arginine. Its pathway is amino-acid biosynthesis; L-arginine biosynthesis; L-arginine from L-ornithine and carbamoyl phosphate: step 3/3. This chain is Argininosuccinate lyase, found in Streptococcus pneumoniae (strain JJA).